A 141-amino-acid polypeptide reads, in one-letter code: Hemoglobin subunit alpha (141 aa).

The 141-residue stretch at 1–141 folds into the Globin domain; sequence VLSAADKANV…VSTVLTSKYR (141 aa). Ser-3 carries the phosphoserine modification. N6-succinyllysine occurs at positions 7 and 11. An N6-acetyllysine; alternate modification is found at Lys-16. An N6-succinyllysine; alternate modification is found at Lys-16. Residue Lys-40 is modified to N6-succinyllysine. A Phosphoserine modification is found at Ser-49. Position 58 (His-58) interacts with O2. Position 87 (His-87) interacts with heme b. Ser-102 is modified (phosphoserine). A Phosphothreonine modification is found at Thr-108. Position 124 is a phosphoserine (Ser-124). Thr-134 and Thr-137 each carry phosphothreonine. The residue at position 138 (Ser-138) is a Phosphoserine.

The protein belongs to the globin family. In terms of assembly, heterotetramer of two alpha chains and two beta chains. In terms of tissue distribution, red blood cells.

Its function is as follows. Involved in oxygen transport from the lung to the various peripheral tissues. In terms of biological role, hemopressin acts as an antagonist peptide of the cannabinoid receptor CNR1. Hemopressin-binding efficiently blocks cannabinoid receptor CNR1 and subsequent signaling. The polypeptide is Hemoglobin subunit alpha (HBA) (Sus scrofa (Pig)).